The following is a 501-amino-acid chain: Mitochondrial inner membrane i-AAA protease supercomplex subunit MGR3 (501 aa).

The Mitochondrial matrix portion of the chain corresponds to 1–77 (MLLQGMRLSQ…PKPNLKKKNR (77 aa)). Residues 39–72 (RPPASNFNTQESAPIPESPANSPTRPQMAPKPNL) form a disordered region. A helical transmembrane segment spans residues 78–95 (SLMYSIIGVSIVGLYFWF). At 96–501 (KSNSRKQKLP…LKAAKKEGLN (406 aa)) the chain is on the mitochondrial intermembrane side. TPR repeat units lie at residues 109 to 144 (QKVW…CDRS), 154 to 187 (TRIE…FFEA), 386 to 420 (GTYI…AKRN), and 440 to 473 (ALST…AKET).

This sequence belongs to the MGR3 family. As to quaternary structure, component of the mitochondrial inner membrane i-AAA protease supercomplex composed of MGR1, MGR3 and YME1. With MGR1, forms a subcomplex that binds to YME1 and to substrates to facilitate proteolysis.

It is found in the mitochondrion inner membrane. Functionally, component of the mitochondrial inner membrane i-AAA protease supercomplex, which degrades misfolded mitochondrial proteins. Together with MGR1, functions in an adapter complex that targets substrates to the i-AAA protease for degradation. Required for growth of cells lacking the mitochondrial genome. This chain is Mitochondrial inner membrane i-AAA protease supercomplex subunit MGR3 (MGR3), found in Saccharomyces cerevisiae (strain ATCC 204508 / S288c) (Baker's yeast).